The sequence spans 385 residues: Pectate lyase E (385 aa).

Residues 1 to 30 (MKNTRVRSIGTKSLLAAVVTAALMATSAYA) form the signal peptide. D164 is a Ca(2+) binding site. Repeat unit 1 spans residues 177 to 182 (DHVTIS). Positions 177–218 (DHVTISDGSFTDDKYTTKDGEKYVQHDGALDIKKGSDYVTIS) are 2 X 6 AA approximate repeats. Position 207 (D207) interacts with Ca(2+). Copy 2 of the repeat occupies 213–218 (DYVTIS). Residue R260 is part of the active site.

This sequence belongs to the polysaccharide lyase 1 family. PLBC subfamily. It depends on Ca(2+) as a cofactor.

It localises to the secreted. The catalysed reaction is Eliminative cleavage of (1-&gt;4)-alpha-D-galacturonan to give oligosaccharides with 4-deoxy-alpha-D-galact-4-enuronosyl groups at their non-reducing ends.. The protein operates within glycan metabolism; pectin degradation; 2-dehydro-3-deoxy-D-gluconate from pectin: step 2/5. Involved in maceration and soft-rotting of plant tissue. In Dickeya chrysanthemi (Pectobacterium chrysanthemi), this protein is Pectate lyase E (pelE).